We begin with the raw amino-acid sequence, 256 residues long: Thiazole synthase (256 aa).

The Schiff-base intermediate with DXP role is filled by lysine 99. Residues glycine 160, 186–187 (AG), and 208–209 (NT) contribute to the 1-deoxy-D-xylulose 5-phosphate site.

Belongs to the ThiG family. Homotetramer. Forms heterodimers with either ThiH or ThiS.

The protein localises to the cytoplasm. The catalysed reaction is [ThiS sulfur-carrier protein]-C-terminal-Gly-aminoethanethioate + 2-iminoacetate + 1-deoxy-D-xylulose 5-phosphate = [ThiS sulfur-carrier protein]-C-terminal Gly-Gly + 2-[(2R,5Z)-2-carboxy-4-methylthiazol-5(2H)-ylidene]ethyl phosphate + 2 H2O + H(+). The protein operates within cofactor biosynthesis; thiamine diphosphate biosynthesis. Functionally, catalyzes the rearrangement of 1-deoxy-D-xylulose 5-phosphate (DXP) to produce the thiazole phosphate moiety of thiamine. Sulfur is provided by the thiocarboxylate moiety of the carrier protein ThiS. In vitro, sulfur can be provided by H(2)S. The protein is Thiazole synthase of Neorickettsia sennetsu (strain ATCC VR-367 / Miyayama) (Ehrlichia sennetsu).